A 273-amino-acid chain; its full sequence is MIVSTSVEQSAQFSVKSLTPFGALLEATEDHSDIQQLSIEQLCQLTWEHRLIVLRGFSLLEREELSTYCQRWGELLVWNFGTVLDLIVHQNPENYLFTNGNVPFHWDGAFAEAVPRFLFFQCLKAPEAGSGGESLFCDTVRILQNVSPQQREIWQKTEISYKTQKVAHYGGEITKSLVIKHPITGLSTLRFAEPLNDASVHLNPLYVEVCNLPAEEQNPFINELIENLYLPQNCFAHEWQEGDFLIADNHALLHGRNPFLSNSQRHLQRVHIL.

The Fe cation site is built by His105, Asp107, and His254.

This sequence belongs to the TfdA dioxygenase family. Fe(2+) is required as a cofactor.

The enzyme catalyses (2S)-3-(1H-indol-3-yl)-2-isocyanopropanoate + 2-oxoglutarate + O2 + H(+) = 3-[(Z)-2-isocyanoethenyl]-1H-indole + succinate + 2 CO2 + H2O. Involved in the biosynthesis of ambiguines, a family of hapalindole-type alkaloids. Responsible for the synthesis of Z-3-(2-isocyanoethen)-indole, a biosynthetic precursor to all ambiguines. The polypeptide is 3-((Z)-2-isocyanoethenyl)-1H-indole synthase (Fischerella ambigua (strain UTEX 1903)).